Reading from the N-terminus, the 585-residue chain is uncharacterized protein (585 aa).

The disordered stretch occupies residues 27-59; it reads DDSERSVKSVSVSISDDEDSKTDVQDNMATPST.

This is an uncharacterized protein from Saccharomyces cerevisiae (strain ATCC 204508 / S288c) (Baker's yeast).